The sequence spans 416 residues: Enterobactin exporter EntS (416 aa).

Residues 1 to 21 are Cytoplasmic-facing; it reads MNKQSWLLNLSLLKTHPAFRA. The helical transmembrane segment at 22-42 threads the bilayer; that stretch reads VFLARFISIVSLGLLGVAVPV. Residues 43 to 55 are Periplasmic-facing; the sequence is QIQMMTHSTWQVG. A helical transmembrane segment spans residues 56–76; it reads LSVTLTGGAMFVGLMVGGVLA. The Cytoplasmic portion of the chain corresponds to 77–83; sequence DRYERKK. The helical transmembrane segment at 84 to 104 threads the bilayer; sequence VILLARGTCGIGFIGLCLNAL. The Periplasmic segment spans residues 105 to 109; the sequence is LPEPS. The helical transmembrane segment at 110-130 threads the bilayer; sequence LLAIYLLGLWDGFFASLGVTA. Topologically, residues 131–156 are cytoplasmic; that stretch reads LLAATPALVGRENLMQAGAITMLTVR. Residues 157-177 traverse the membrane as a helical segment; it reads LGSVISPMIGGLLLATGGVAW. Asn-178 is a topological domain (periplasmic). A helical membrane pass occupies residues 179–199; the sequence is YGLAAAGTFITLLPLLSLPAL. Residues 200-218 lie on the Cytoplasmic side of the membrane; the sequence is PPPPQPREHPLKSLLAGFR. Residues 219 to 239 traverse the membrane as a helical segment; it reads FLLASPLVGGIALLGGLLTMA. At 240–256 the chain is on the periplasmic side; it reads SAVRVLYPALADNWQMS. The helical transmembrane segment at 257-277 threads the bilayer; that stretch reads AAQIGFLYAAIPLGAAIGALT. Over 278-287 the chain is Cytoplasmic; it reads SGKLAHSVRP. The helical transmembrane segment at 288-307 threads the bilayer; the sequence is GLLMLLSTLGAFLAISLFGL. Over 308–313 the chain is Periplasmic; sequence MPMWIL. A helical transmembrane segment spans residues 314–336; it reads GVVCLALFGWLSAVSSLLQYTML. Over 337–356 the chain is Cytoplasmic; that stretch reads QTQTPEAMLGRINGLWTAQN. A helical transmembrane segment spans residues 357 to 377; that stretch reads VTGDAIGAALLGGLGAMMTPV. Ala-378 is a topological domain (periplasmic). Residues 379–399 form a helical membrane-spanning segment; the sequence is SASASGFGLLIIGVLLLLVLV. At 400 to 416 the chain is on the cytoplasmic side; that stretch reads ELRRFRQTPPQVTASDS.

This sequence belongs to the major facilitator superfamily. EntS (TC 2.A.1.38) family.

Its subcellular location is the cell inner membrane. Functionally, component of an export pathway for enterobactin. In Escherichia coli O45:K1 (strain S88 / ExPEC), this protein is Enterobactin exporter EntS.